The chain runs to 337 residues: Ribosomal RNA small subunit methyltransferase H (337 aa).

S-adenosyl-L-methionine is bound by residues 35–37 (GGY), Asp-54, Phe-81, Asp-102, and Gln-109. The tract at residues 286–316 (PVGPSEAEAAANPRARSAKLRAGERTDAPAP) is disordered. The segment covering 289-300 (PSEAEAAANPRA) has biased composition (low complexity).

It belongs to the methyltransferase superfamily. RsmH family.

The protein resides in the cytoplasm. It catalyses the reaction cytidine(1402) in 16S rRNA + S-adenosyl-L-methionine = N(4)-methylcytidine(1402) in 16S rRNA + S-adenosyl-L-homocysteine + H(+). Its function is as follows. Specifically methylates the N4 position of cytidine in position 1402 (C1402) of 16S rRNA. This is Ribosomal RNA small subunit methyltransferase H from Methylobacterium sp. (strain 4-46).